The primary structure comprises 129 residues: Large ribosomal subunit protein bL17 (129 aa).

The protein belongs to the bacterial ribosomal protein bL17 family. In terms of assembly, part of the 50S ribosomal subunit. Contacts protein L32.

This chain is Large ribosomal subunit protein bL17, found in Hahella chejuensis (strain KCTC 2396).